Here is a 185-residue protein sequence, read N- to C-terminus: Transcription termination/antitermination protein NusG (185 aa).

A KOW domain is found at 134-164 (VGKRVRIVDGAFSGFEAPITEINGDKLTLTV).

Belongs to the NusG family.

Its function is as follows. Participates in transcription elongation, termination and antitermination. In Lactococcus lactis subsp. lactis (strain IL1403) (Streptococcus lactis), this protein is Transcription termination/antitermination protein NusG.